The primary structure comprises 350 residues: Secreted effector protein PipB2 (350 aa).

Pentapeptide repeat domains lie at 162–201 (ANLT…NLSG), 202–241 (TSLG…SLLG), 247–286 (CNCS…IMEG), and 287–326 (AVLT…TLTD).

In terms of assembly, interacts with the host kinesin light chain (KLC), a subunit of the kinesin-1 motor complex.

Its subcellular location is the secreted. The protein resides in the host membrane. Effector proteins function to alter host cell physiology and promote bacterial survival in host tissues. Involved in the reorganization of late endosome/lysosome (LE/Lys) compartments in mammalian cells. Necessary and sufficient to link kinesin-1 onto the Salmonella-containing vacuole (SCV) membrane. Required for centrifugal extension of lysosomal glycoprotein-rich membrane tubules, known as Salmonella-induced filaments (Sifs), away from the SCV and toward the cell periphery. Required for virulence, but not for intracellular survival and replication in phagocytic cells. This Salmonella typhimurium (strain LT2 / SGSC1412 / ATCC 700720) protein is Secreted effector protein PipB2 (pipB2).